The sequence spans 429 residues: Adenosylmethionine-8-amino-7-oxononanoate aminotransferase (429 aa).

A substrate-binding site is contributed by Trp-52. 112–113 (GS) is a binding site for pyridoxal 5'-phosphate. Residue Tyr-144 coordinates substrate. Asp-245 is a pyridoxal 5'-phosphate binding site. Positions 274 and 307 each coordinate substrate. Lys-274 bears the N6-(pyridoxal phosphate)lysine mark. Residue 308–309 (PT) coordinates pyridoxal 5'-phosphate. A substrate-binding site is contributed by Arg-391.

This sequence belongs to the class-III pyridoxal-phosphate-dependent aminotransferase family. BioA subfamily. Homodimer. Pyridoxal 5'-phosphate serves as cofactor.

The protein localises to the cytoplasm. It carries out the reaction (8S)-8-amino-7-oxononanoate + S-adenosyl-L-methionine = S-adenosyl-4-methylsulfanyl-2-oxobutanoate + (7R,8S)-7,8-diammoniononanoate. It functions in the pathway cofactor biosynthesis; biotin biosynthesis; 7,8-diaminononanoate from 8-amino-7-oxononanoate (SAM route): step 1/1. Functionally, catalyzes the transfer of the alpha-amino group from S-adenosyl-L-methionine (SAM) to 7-keto-8-aminopelargonic acid (KAPA) to form 7,8-diaminopelargonic acid (DAPA). It is the only aminotransferase known to utilize SAM as an amino donor. This Buchnera aphidicola subsp. Baizongia pistaciae (strain Bp) protein is Adenosylmethionine-8-amino-7-oxononanoate aminotransferase.